The following is a 1353-amino-acid chain: Adenylate cyclase type 9 (1353 aa).

2 disordered regions span residues Met-1–Ser-27 and Ser-51–Leu-73. Residues Met-1–Arg-117 lie on the Cytoplasmic side of the membrane. Positions Glu-16 to Ser-27 are enriched in polar residues. Positions Ser-51–Arg-66 are enriched in low complexity. A helical membrane pass occupies residues Tyr-118–Met-138. The Extracellular segment spans residues Lys-139 to Lys-141. A helical membrane pass occupies residues Val-142–Phe-162. Topologically, residues Thr-163–His-171 are cytoplasmic. A helical membrane pass occupies residues Tyr-172 to Phe-192. The Extracellular segment spans residues Gln-193–Asp-215. The N-linked (GlcNAc...) asparagine glycan is linked to Asn-206. The helical transmembrane segment at Thr-216–Tyr-235 threads the bilayer. At Thr-236–Pro-241 the chain is on the cytoplasmic side. The helical transmembrane segment at Leu-242 to Phe-259 threads the bilayer. Over Gly-260–Glu-280 the chain is Extracellular. A helical transmembrane segment spans residues Leu-281–Met-301. The Cytoplasmic portion of the chain corresponds to Ser-302–Ser-786. The tract at residues Gln-349–Ile-375 is disordered. Residues Lys-359–Ser-374 are compositionally biased toward basic residues. Residues Asp-399, Ile-400, and Asp-443 each contribute to the Mg(2+) site. ATP contacts are provided by residues Asp-399 to Thr-404, Leu-441 to Asp-443, and Arg-487. Disordered regions lie at residues Asp-596–Ser-615 and Ser-641–Leu-685. A phosphoserine mark is found at Ser-610 and Ser-613. Over residues Ser-661–Leu-676 the composition is skewed to polar residues. Phosphoserine occurs at positions 688, 691, and 706. The chain crosses the membrane as a helical span at residues Ser-787–Leu-807. Topologically, residues Lys-808–Pro-818 are extracellular. A helical transmembrane segment spans residues Ala-819–Ile-839. Residues Arg-840–Cys-867 are Cytoplasmic-facing. Residues Ile-868 to Phe-888 form a helical membrane-spanning segment. The Extracellular segment spans residues Glu-889–Asn-891. The helical transmembrane segment at Ile-892 to Phe-912 threads the bilayer. Over Cys-913 to Arg-920 the chain is Cytoplasmic. The chain crosses the membrane as a helical span at residues Ser-921–Gln-941. The Extracellular segment spans residues Asp-942 to Ala-975. 2 N-linked (GlcNAc...) asparagine glycosylation sites follow: Asn-955 and Asn-964. Residues Ser-976 to Leu-996 form a helical membrane-spanning segment. At Asn-997–Val-1353 the chain is on the cytoplasmic side. Residues Lys-1108, Asp-1185–Trp-1187, Asn-1192–Arg-1196, and Lys-1232 contribute to the ATP site. Ser-1257, Ser-1259, Ser-1295, Ser-1307, and Ser-1332 each carry phosphoserine. Positions Lys-1290–Glu-1314 are disordered. Basic and acidic residues predominate over residues Thr-1299 to Glu-1314.

The protein belongs to the adenylyl cyclase class-4/guanylyl cyclase family. It depends on Mg(2+) as a cofactor. Mn(2+) is required as a cofactor. Detected in brain, spleen, lung, liver and testis (at protein level). Detected in brain, especially in hippocampus, cerebellum and neocortex. Found in decreasing order in skeletal muscle, heart, adrenal gland, ovary and brain; and to a lesser extent, in kidney, liver, testis, lung, thymus and spleen.

Its subcellular location is the cell membrane. The enzyme catalyses ATP = 3',5'-cyclic AMP + diphosphate. With respect to regulation, insensitive to calcium/calmodulin, forskolin and somatostatin. Stimulated by beta-adrenergic receptor activation. Activity is down-regulated by calcium/calcineurin. Its function is as follows. Adenylyl cyclase that catalyzes the formation of the signaling molecule cAMP in response to activation of G protein-coupled receptors. Contributes to signaling cascades activated by CRH (corticotropin-releasing factor), corticosteroids and by beta-adrenergic receptors. The sequence is that of Adenylate cyclase type 9 (Adcy9) from Mus musculus (Mouse).